Reading from the N-terminus, the 201-residue chain is MGNLFGRKKQSRVTEQDKAILQLKQQRDKLRQYQKRIAQQLERERALARQLLRDGRKERAKLLLKKKRYQEQLLDRTENQISSLEAMVQSIEFTQIEMKVMEGLQFGNECLNKMHQVMSIEEVERILDETQEAVEYQRQIDELLAGSFTQEDEDAILEELSAITQEQIELPEVPSEPLPEKIPENVPVKARPRQAELVAAS.

The N-myristoyl glycine moiety is linked to residue Gly2. Residues 10 to 145 (QSRVTEQDKA…YQRQIDELLA (136 aa)) adopt a coiled-coil conformation. Ser119 is modified (phosphoserine). Thr130 is modified (phosphothreonine). A Type-2 MIT-interacting motif motif is present at residues 168–179 (IELPEVPSEPLP). The segment at 170 to 181 (LPEVPSEPLPEK) is interaction with VPS4A.

The protein belongs to the SNF7 family. In terms of assembly, probable core component of the endosomal sorting required for transport complex III (ESCRT-III). ESCRT-III components are thought to multimerize to form a flat lattice on the perimeter membrane of the endosome. Several assembly forms of ESCRT-III may exist that interact and act sequentially. Interacts with VPS4A; the interaction is direct. Interacts with VPS4B; the interaction is direct. Interacts with CHMP4A, CHMP4B and CHMP4C. Interacts with SNF8, VPS25 and VPS36. ISGylated in a CHMP5-dependent manner. Isgylation weakens its interaction with VPS4A. Ubiquitously expressed.

Its subcellular location is the endomembrane system. It localises to the endosome membrane. It is found in the late endosome membrane. The protein resides in the membrane. Probable core component of the endosomal sorting required for transport complex III (ESCRT-III) which is involved in multivesicular bodies (MVBs) formation and sorting of endosomal cargo proteins into MVBs. MVBs contain intraluminal vesicles (ILVs) that are generated by invagination and scission from the limiting membrane of the endosome and mostly are delivered to lysosomes enabling degradation of membrane proteins, such as stimulated growth factor receptors, lysosomal enzymes and lipids. The MVB pathway appears to require the sequential function of ESCRT-O, -I,-II and -III complexes. ESCRT-III proteins mostly dissociate from the invaginating membrane before the ILV is released. The ESCRT machinery also functions in topologically equivalent membrane fission events, such as the terminal stages of cytokinesis and the budding of enveloped viruses (HIV-1 and other lentiviruses). ESCRT-III proteins are believed to mediate the necessary vesicle extrusion and/or membrane fission activities, possibly in conjunction with the AAA ATPase VPS4. In the ESCRT-III complex, it probably serves as an acceptor for the ESCRT-II complex on endosomal membranes. The polypeptide is Charged multivesicular body protein 6 (CHMP6) (Homo sapiens (Human)).